The primary structure comprises 101 residues: Ubiquitin-related modifier 1 homolog (101 aa).

A 1-thioglycine modification is found at Gly101. Residue Gly101 forms a Glycyl lysine isopeptide (Gly-Lys) (interchain with K-? in acceptor proteins) linkage.

This sequence belongs to the URM1 family. As to quaternary structure, interacts with cer. In terms of processing, C-terminal thiocarboxylation occurs in 2 steps, it is first acyl-adenylated (-COAMP) via the hesA/moeB/thiF part of the MOCS3 homolog, then thiocarboxylated (-COSH) via the rhodanese domain of the MOCS3 homolog.

It localises to the cytoplasm. It functions in the pathway tRNA modification; 5-methoxycarbonylmethyl-2-thiouridine-tRNA biosynthesis. In terms of biological role, acts as a sulfur carrier required for 2-thiolation of mcm(5)S(2)U at tRNA wobble positions of cytosolic tRNA(Lys), tRNA(Glu) and tRNA(Gln). Serves as sulfur donor in tRNA 2-thiolation reaction by being thiocarboxylated (-COSH) at its C-terminus by MOCS3. The sulfur is then transferred to tRNA to form 2-thiolation of mcm(5)S(2)U. Also acts as a ubiquitin-like protein (UBL) that is covalently conjugated via an isopeptide bond to lysine residues of target proteins such as Prx2/Jafrac1, Ciao1, Eip71CD and GILT1. The thiocarboxylated form serves as substrate for conjugation and oxidative stress specifically induces the formation of UBL-protein conjugates. This chain is Ubiquitin-related modifier 1 homolog, found in Drosophila simulans (Fruit fly).